A 212-amino-acid chain; its full sequence is Tetraspanin-31-B (212 aa).

Over 1–12 (MVCGGFTCSKNA) the chain is Cytoplasmic. The helical transmembrane segment at 13–33 (LCALNVVYMLVGVLLIIVAAW) threads the bilayer. At 34–44 (GKGFGIVSSIH) the chain is on the extracellular side. Residues 45 to 65 (IIGGVIAIGVFLLLIAIIGLI) traverse the membrane as a helical segment. At 66–72 (GAVSHHQ) the chain is on the cytoplasmic side. Residues 73–93 (VMLFIYMVVLILVFIFQFIVS) traverse the membrane as a helical segment. Over 94–175 (CSCLAMNRSQ…MLNHADEALK (82 aa)) the chain is Extracellular. N-linked (GlcNAc...) asparagine glycosylation is found at Asn100, Asn109, Asn117, and Asn134. The helical transmembrane segment at 176 to 196 (ILGGVGLFFSFTEILGVWLAF) threads the bilayer. Residues 197–212 (RYRNQKDPRANPSAFL) are Cytoplasmic-facing.

The protein belongs to the tetraspanin (TM4SF) family.

It is found in the membrane. The protein is Tetraspanin-31-B (tspan31-b) of Xenopus laevis (African clawed frog).